A 332-amino-acid chain; its full sequence is Ketol-acid reductoisomerase (NADP(+)) (332 aa).

The 181-residue stretch at 2–182 folds into the KARI N-terminal Rossmann domain; the sequence is AKVYIDKDAS…GATRAGVIET (181 aa). Residues 25–28, Ser53, and 83–86 contribute to the NADP(+) site; these read YGSQ and DMVQ. The active site involves His108. Gly134 is a binding site for NADP(+). One can recognise a KARI C-terminal knotted domain in the interval 183–328; it reads TFKEETETDL…RQIREISLRG (146 aa). Positions 191, 195, 227, and 231 each coordinate Mg(2+). Ser252 contacts substrate.

The protein belongs to the ketol-acid reductoisomerase family. Mg(2+) serves as cofactor.

It carries out the reaction (2R)-2,3-dihydroxy-3-methylbutanoate + NADP(+) = (2S)-2-acetolactate + NADPH + H(+). The enzyme catalyses (2R,3R)-2,3-dihydroxy-3-methylpentanoate + NADP(+) = (S)-2-ethyl-2-hydroxy-3-oxobutanoate + NADPH + H(+). The protein operates within amino-acid biosynthesis; L-isoleucine biosynthesis; L-isoleucine from 2-oxobutanoate: step 2/4. It participates in amino-acid biosynthesis; L-valine biosynthesis; L-valine from pyruvate: step 2/4. In terms of biological role, involved in the biosynthesis of branched-chain amino acids (BCAA). Catalyzes an alkyl-migration followed by a ketol-acid reduction of (S)-2-acetolactate (S2AL) to yield (R)-2,3-dihydroxy-isovalerate. In the isomerase reaction, S2AL is rearranged via a Mg-dependent methyl migration to produce 3-hydroxy-3-methyl-2-ketobutyrate (HMKB). In the reductase reaction, this 2-ketoacid undergoes a metal-dependent reduction by NADPH to yield (R)-2,3-dihydroxy-isovalerate. In Sulfurisphaera tokodaii (strain DSM 16993 / JCM 10545 / NBRC 100140 / 7) (Sulfolobus tokodaii), this protein is Ketol-acid reductoisomerase (NADP(+)).